Consider the following 117-residue polypeptide: Minor capsid protein p17 (117 aa).

The N-linked (GlcNAc...) asparagine; by host glycan is linked to Asn-12. A helical membrane pass occupies residues 39-59 (AILLGILILLVIILIIVAIVY). N-linked (GlcNAc...) asparagine; by host glycosylation is found at Asn-61 and Asn-97.

It belongs to the asfivirus minor capsid protein p17 family. As to quaternary structure, interacts with the minor capsid protein M1249L and with the hexon capsid protein p72 capsomers; these interactions form a rigid zipper structure that stabilizes the capsomers. Interacts with host STING1.

The protein localises to the virion membrane. It localises to the host endoplasmic reticulum membrane. The protein resides in the host Golgi apparatus membrane. In terms of biological role, together with the penton and the other minor capsid proteins (M1249L, p49), forms a complicated network immediately below the outer capsid shell, stabilizing the whole capsid. Three copies of p17 encircle each p72 capsomer in the inner capsid shell, anchoring p72 capsomers on the inner membrane. Required for the assembly of the capsid and icosahedral morphogenesis. Additionally, inhibits the host cGAS-STING pathway through its interaction with STING1 and subsequent interference of the recruitment of downstream components TBK1 and IKBKE. The sequence is that of Minor capsid protein p17 from African swine fever virus (strain Badajoz 1971 Vero-adapted) (Ba71V).